A 256-amino-acid chain; its full sequence is Deoxyribose-phosphate aldolase (256 aa).

Asp102 serves as the catalytic Proton donor/acceptor. The active-site Schiff-base intermediate with acetaldehyde is Lys165. Lys197 serves as the catalytic Proton donor/acceptor.

It belongs to the DeoC/FbaB aldolase family. DeoC type 2 subfamily.

It localises to the cytoplasm. The catalysed reaction is 2-deoxy-D-ribose 5-phosphate = D-glyceraldehyde 3-phosphate + acetaldehyde. It functions in the pathway carbohydrate degradation; 2-deoxy-D-ribose 1-phosphate degradation; D-glyceraldehyde 3-phosphate and acetaldehyde from 2-deoxy-alpha-D-ribose 1-phosphate: step 2/2. Catalyzes a reversible aldol reaction between acetaldehyde and D-glyceraldehyde 3-phosphate to generate 2-deoxy-D-ribose 5-phosphate. This Shewanella baltica (strain OS155 / ATCC BAA-1091) protein is Deoxyribose-phosphate aldolase.